The chain runs to 447 residues: MTRLFGTDGVRGLANEVLTAPLALKLGAAAAHVLTAEKRVDGRRPVAIVGRDPRVSGEMLAAALSAGMASQGVDVIRVGVIPTPAVAFLTDDYGADMGVMISASHNPMPDNGIKFFSAGGHKLPDHVEDEIERVMDSLPAEGPTGHGVGRVIEEATDAQDRYLEHLKEAVPTSLEGIKIVVDAANGAASVVAPTAYEAAGATVIAIHNKPDSYNINMDCGSTHIDQVQAAVLKHGADLGLAHDGDADRCLAVDKDGNLVDGDQIMALLAIAMKENGELRKNTLVGTVMSNLGLKIAMDEAGITLRTTKVGDRYVLEDLNAGGFSLGGEQSGHIVLPDHGTTGDGTLTGLSIMARMAETGKSLGELAQAMTVLPQVLINVPVSDKSTIVSHPSVVAAIAEAEAELGATGRVLLRASGTEELFRVMVEAGDKEQARRIAGRLAAVVAEV.

Residue Ser104 is the Phosphoserine intermediate of the active site. Mg(2+)-binding residues include Ser104, Asp243, Asp245, and Asp247. Position 104 is a phosphoserine (Ser104).

The protein belongs to the phosphohexose mutase family. It depends on Mg(2+) as a cofactor. In terms of processing, activated by phosphorylation.

It carries out the reaction alpha-D-glucosamine 1-phosphate = D-glucosamine 6-phosphate. In terms of biological role, catalyzes the conversion of glucosamine-6-phosphate to glucosamine-1-phosphate. The chain is Phosphoglucosamine mutase from Corynebacterium glutamicum (strain ATCC 13032 / DSM 20300 / JCM 1318 / BCRC 11384 / CCUG 27702 / LMG 3730 / NBRC 12168 / NCIMB 10025 / NRRL B-2784 / 534).